The primary structure comprises 296 residues: Guided entry of tail-anchored proteins factor CAMLG (296 aa).

The disordered stretch occupies residues 1–79 (MESMAVATDG…SDKLNSLSVP (79 aa)). Over 1 to 189 (MESMAVATDG…NTTEEFDSFR (189 aa)) the chain is Cytoplasmic. S55 bears the Phosphoserine mark. The span at 61 to 72 (SQTKSKQQDSDK) shows a compositional bias: basic and acidic residues. Residues 190 to 207 (IFRLVGCALLALGVRAFV) form a helical membrane-spanning segment. Over 208–212 (CKYLS) the chain is Lumenal. C208 and C284 are oxidised to a cystine. Residues 213 to 231 (IFAPFLTLQLAYMGLYKYF) form a helical membrane-spanning segment. The Cytoplasmic segment spans residues 232 to 269 (PKSEKKIKTTVLTAALLLSGIPAEVINRSMDTYSKMGE). Residues 270–288 (VFTDLCVYFFTFIFCHELL) traverse the membrane as a helical segment. Topologically, residues 289–296 (DYWGSEVP) are lumenal.

As to quaternary structure, component of the Golgi to ER traffic (GET) complex, which is composed of GET1/WRB, CAMLG/GET2 and GET3/TRC40. Within the complex, GET1 and CAMLG form a heterotetramer which is stabilized by phosphatidylinositol binding and which binds to the GET3 homodimer. Interacts (via C-terminus) with GET1. Interacts (via N-terminus) with GET3. GET3 shows a higher affinity for CAMLG than for GET1. Interacts (via N-terminus) with TNFRSF13B/TACI (via C-terminus). In terms of assembly, (Microbial infection) Interacts with human herpes virus 8/HHV-8 protein K7; this interaction modulates intracellular calcium concentration. As to expression, ubiquitous. Highest levels in brain, testis and ovary.

The protein resides in the endoplasmic reticulum membrane. Required for the post-translational delivery of tail-anchored (TA) proteins to the endoplasmic reticulum. Together with GET1/WRB, acts as a membrane receptor for soluble GET3/TRC40, which recognizes and selectively binds the transmembrane domain of TA proteins in the cytosol. Required for the stability of GET1. Stimulates calcium signaling in T cells through its involvement in elevation of intracellular calcium. Essential for the survival of peripheral follicular B cells. The protein is Guided entry of tail-anchored proteins factor CAMLG of Homo sapiens (Human).